The primary structure comprises 288 residues: MAKSGNVLNKIGSLYQSLTKSEKKIADTILRSPDLVSQCSLSEIAKHLQVGEATLVRFCRTIGFKGFSEFKLELSIELATKDNQDESILETEIMPSDDSLTIAQKLQTAVANVMEETINLLDLKQLEEVVKVLKKARRIFLFGVGSSGVTAEDAKNKLMRIGFQVDASGNNHFMYMQAALLTSSDVAIGLSHSGYSAETAHTIKIAKQNGATTVALTHSLRSPVTEYADYVLVNGNKQGKLQGDSIGTKIAQLFVLDLIYALLVQGEEDIAAQTKQKTLNVILEQRIK.

Residues 5–81 (GNVLNKIGSL…LELSIELATK (77 aa)) form the HTH rpiR-type domain. The H-T-H motif DNA-binding region spans 41-60 (LSEIAKHLQVGEATLVRFCR). The SIS domain maps to 129 to 269 (VVKVLKKARR…YALLVQGEED (141 aa)).

This is an uncharacterized protein from Haemophilus influenzae (strain ATCC 51907 / DSM 11121 / KW20 / Rd).